Reading from the N-terminus, the 214-residue chain is Eukaryotic translation initiation factor 4E-1B (214 aa).

MRNA-binding positions include 53–54, 99–100, 154–159, and 202–204; these read WQ, WE, RAKGDK, and TKS.

As to expression, ovary, muscle and testis.

The protein resides in the cytoplasm. It is found in the nucleus. In terms of biological role, does not appear to be a mRNA-cap-binding protein. This Danio rerio (Zebrafish) protein is Eukaryotic translation initiation factor 4E-1B.